A 1054-amino-acid polypeptide reads, in one-letter code: DIS3-like exonuclease 1 (1054 aa).

One can recognise a CSD1 domain in the interval 236–309 (AGIKSGRYIQ…PKNEWKGRTV (74 aa)). Residues 365–431 (ILVTPWDYRI…GEIATILVEN (67 aa)) enclose the CSD2 domain. In terms of domain architecture, RNB spans 465–816 (RKDLRKSHLV…VHRLLMAAIS (352 aa)). Phosphoserine is present on S989.

The protein belongs to the RNR ribonuclease family. Component of the RNA exosome complex. The catalytically inactive RNA exosome core (Exo-9) complex is believed to associate with catalytic subunits EXOSC10, and DIS3 or DIS3L in cytoplasmic- and nuclear-specific RNA exosome complex forms. Requires Mg(2+) as cofactor.

It is found in the cytoplasm. The catalysed reaction is Exonucleolytic cleavage in the 3'- to 5'-direction to yield nucleoside 5'-phosphates.. Its function is as follows. Catalytic component of the RNA exosome complex which has 3'-&gt;5' exoribonuclease activity and participates in a multitude of cellular RNA processing and degradation events. In the cytoplasm, the RNA exosome complex is involved in general mRNA turnover and specifically degrades inherently unstable mRNAs containing AU-rich elements (AREs) within their 3' untranslated regions, and in RNA surveillance pathways, preventing translation of aberrant mRNAs. It seems to be involved in degradation of histone mRNA. This is DIS3-like exonuclease 1 (DIS3L) from Homo sapiens (Human).